The following is a 94-amino-acid chain: Large ribosomal subunit protein uL23 (94 aa).

It belongs to the universal ribosomal protein uL23 family. As to quaternary structure, part of the 50S ribosomal subunit. Contacts protein L29, and trigger factor when it is bound to the ribosome.

Its function is as follows. One of the early assembly proteins it binds 23S rRNA. One of the proteins that surrounds the polypeptide exit tunnel on the outside of the ribosome. Forms the main docking site for trigger factor binding to the ribosome. This chain is Large ribosomal subunit protein uL23, found in Listeria monocytogenes serotype 4b (strain CLIP80459).